The following is a 282-amino-acid chain: Putative 1-acyl-sn-glycerol-3-phosphate acyltransferase acl-2 (282 aa).

The next 2 helical transmembrane spans lie at 4-24 (FWSIVVFFLLSILFILYNIST) and 32-52 (ISFYYFTILLHGMEVCVTMIP). Residues 98–103 (HQSSLD) carry the HXXXXD motif motif. A helical transmembrane segment spans residues 122-142 (ILAYVPFFNLGAYFSNTIFID).

Belongs to the 1-acyl-sn-glycerol-3-phosphate acyltransferase family.

The protein localises to the membrane. The enzyme catalyses a 1-acyl-sn-glycero-3-phosphate + an acyl-CoA = a 1,2-diacyl-sn-glycero-3-phosphate + CoA. It participates in phospholipid metabolism; CDP-diacylglycerol biosynthesis; CDP-diacylglycerol from sn-glycerol 3-phosphate: step 2/3. Functionally, converts lysophosphatidic acid (LPA) into phosphatidic acid by incorporating an acyl moiety at the sn-2 position of the glycerol backbone. The protein is Putative 1-acyl-sn-glycerol-3-phosphate acyltransferase acl-2 (acl-2) of Caenorhabditis elegans.